Reading from the N-terminus, the 655-residue chain is Chaperone protein DnaK 3 (655 aa).

Thr197 is modified (phosphothreonine; by autocatalysis).

It belongs to the heat shock protein 70 family.

Functionally, acts as a chaperone. In Synechococcus sp. (strain ATCC 27144 / PCC 6301 / SAUG 1402/1) (Anacystis nidulans), this protein is Chaperone protein DnaK 3.